A 223-amino-acid polypeptide reads, in one-letter code: Killer cell lectin-like receptor subfamily B member 1B allele A (223 aa).

The Cytoplasmic segment spans residues 1–45 (MDTAVVYADLHLARTGEPKREPPPSLSPDTCQCPRWHRLALKLGC). Residues 5-10 (VVYADL) carry the ITIM motif motif. The LCK-binding motif motif lies at 31 to 34 (CQCP). Residues 46 to 66 (ACLILLVLSVIGLGVLVLTLL) form a helical; Signal-anchor for type II membrane protein membrane-spanning segment. Topologically, residues 67–223 (QKPLIQNSPA…LKRESTCNDS (157 aa)) are extracellular. One can recognise a C-type lectin domain in the interval 101 to 211 (HQDKCFHVSQ…CDSDNIWICQ (111 aa)). Disulfide bonds link Cys-122/Cys-210 and Cys-189/Cys-202.

As to quaternary structure, homodimer; disulfide-linked. Interacts with tyrosine kinase LCK. Binds PTPN6/SHP-1 in a phosphorylation-dependent manner. In terms of tissue distribution, expressed in a subset of natural killer cells.

It is found in the membrane. Functionally, receptor for CLEC2D/OCIL. Ligand-binding contributes to inhibition of cytotoxic natural killer (NK) cells. May mediate MHC class I-independent 'missing-self' recognition of allografts, tumor cells and virus-infected cells. In Rattus norvegicus (Rat), this protein is Killer cell lectin-like receptor subfamily B member 1B allele A.